Consider the following 419-residue polypeptide: Protein phosphatase methylesterase 1 (419 aa).

A compositionally biased stretch (basic residues) spans methionine 1–proline 12. The segment at methionine 1–alanine 75 is disordered. Over residues threonine 32 to glycine 52 the composition is skewed to acidic residues. Catalysis depends on residues serine 230, aspartate 256, and histidine 383.

The protein belongs to the AB hydrolase superfamily.

It catalyses the reaction [phosphatase 2A protein]-C-terminal L-leucine methyl ester + H2O = [phosphatase 2A protein]-C-terminal L-leucine + methanol + H(+). Functionally, demethylates proteins that have been reversibly carboxymethylated. Demethylates the phosphatase PP2A catalytic subunit. This is Protein phosphatase methylesterase 1 (PPE1) from Yarrowia lipolytica (strain CLIB 122 / E 150) (Yeast).